The primary structure comprises 226 residues: Chalcone--flavanone isomerase 3 (226 aa).

Residues T49, N114, and S191 each coordinate substrate.

The protein belongs to the chalcone isomerase family.

The catalysed reaction is a chalcone = a flavanone.. It participates in secondary metabolite biosynthesis; flavonoid biosynthesis. In terms of biological role, catalyzes the intramolecular cyclization of bicyclic chalcones into tricyclic (S)-flavanones. Responsible for the isomerization of 4,2',4',6'-tetrahydroxychalcone (also termed chalcone) into naringenin. The sequence is that of Chalcone--flavanone isomerase 3 (CHI3) from Glycine max (Soybean).